A 67-amino-acid chain; its full sequence is MKTFALQGDTLDAICVRYYGRTEGVVETVLAANPGLAELGAVLPHGTAVELPDVQTAPVAETVNLWE.

Its subcellular location is the virion. Functionally, might be involved in the peptidoglycan digestion during virus entry into the host cell. The protein is Baseplate protein X (X) of Escherichia phage P2 (Bacteriophage P2).